Here is a 454-residue protein sequence, read N- to C-terminus: Chromosomal replication initiator protein DnaA (454 aa).

Positions 1 to 79 are domain I, interacts with DnaA modulators; sequence MSLCLWKQCL…NSPFIKFKVY (79 aa). The segment at 79–117 is domain II; that stretch reads YQTSKEKKFKKNILQKIQNLNAKPIWDKIPIFKKSSHRS. The segment at 118-334 is domain III, AAA+ region; it reads NINKKHSFEN…GALNRVIVNA (217 aa). ATP is bound by residues G162, G164, K165, and T166. Residues 335–454 are domain IV, binds dsDNA; that stretch reads NFTHRSITVE…FSNLIRTLSV (120 aa).

The protein belongs to the DnaA family. Oligomerizes as a right-handed, spiral filament on DNA at oriC.

It is found in the cytoplasm. Its function is as follows. Plays an essential role in the initiation and regulation of chromosomal replication. ATP-DnaA binds to the origin of replication (oriC) to initiate formation of the DNA replication initiation complex once per cell cycle. Binds the DnaA box (a 9 base pair repeat at the origin) and separates the double-stranded (ds)DNA. Forms a right-handed helical filament on oriC DNA; dsDNA binds to the exterior of the filament while single-stranded (ss)DNA is stabiized in the filament's interior. The ATP-DnaA-oriC complex binds and stabilizes one strand of the AT-rich DNA unwinding element (DUE), permitting loading of DNA polymerase. After initiation quickly degrades to an ADP-DnaA complex that is not apt for DNA replication. Binds acidic phospholipids. The sequence is that of Chromosomal replication initiator protein DnaA from Buchnera aphidicola subsp. Schizaphis graminum (strain Sg).